The chain runs to 35 residues: Photosystem II reaction center protein T (35 aa).

A helical membrane pass occupies residues 3–23; that stretch reads ALVYTFLLVSTLGIIFFAIFF.

Belongs to the PsbT family. PSII is composed of 1 copy each of membrane proteins PsbA, PsbB, PsbC, PsbD, PsbE, PsbF, PsbH, PsbI, PsbJ, PsbK, PsbL, PsbM, PsbT, PsbY, PsbZ, Psb30/Ycf12, at least 3 peripheral proteins of the oxygen-evolving complex and a large number of cofactors. It forms dimeric complexes.

It is found in the plastid. Its subcellular location is the chloroplast thylakoid membrane. Functionally, found at the monomer-monomer interface of the photosystem II (PS II) dimer, plays a role in assembly and dimerization of PSII. PSII is a light-driven water plastoquinone oxidoreductase, using light energy to abstract electrons from H(2)O, generating a proton gradient subsequently used for ATP formation. The sequence is that of Photosystem II reaction center protein T from Oenothera argillicola (Appalachian evening primrose).